The following is a 299-amino-acid chain: MLDKTRLRIAMQKSGRLSEDSQALLARCGIKINLHQQRLIAFAENMPIDILRVRDDDIPGLVMDGVVDLGIIGENVLEEELLTRRAQGDDPRYTLLRRLDFGACRLSLAMPIDAAYDGARGLQDCRIATSYPHLLKRYLDGQGVRFKSCLLNGSVEVAPRAGLADAICDLVSTGATLEANGLREVEVIYRSKACLIQRDGEMPPAKQALIERLMTRIQGVIQARESKYIMLHAPSDRLEEIMALLPGAERPTLLPLAGDKRRVAMHMVSSETLFWETMEQLKALGASSILVLPIEKMME.

The protein belongs to the ATP phosphoribosyltransferase family. Long subfamily. Equilibrium between an active dimeric form, an inactive hexameric form and higher aggregates. Interconversion between the various forms is largely reversible and is influenced by the natural substrates and inhibitors of the enzyme. Requires Mg(2+) as cofactor.

It localises to the cytoplasm. The catalysed reaction is 1-(5-phospho-beta-D-ribosyl)-ATP + diphosphate = 5-phospho-alpha-D-ribose 1-diphosphate + ATP. Its pathway is amino-acid biosynthesis; L-histidine biosynthesis; L-histidine from 5-phospho-alpha-D-ribose 1-diphosphate: step 1/9. Feedback inhibited by histidine. In terms of biological role, catalyzes the condensation of ATP and 5-phosphoribose 1-diphosphate to form N'-(5'-phosphoribosyl)-ATP (PR-ATP). Has a crucial role in the pathway because the rate of histidine biosynthesis seems to be controlled primarily by regulation of HisG enzymatic activity. This is ATP phosphoribosyltransferase from Edwardsiella ictaluri (strain 93-146).